Reading from the N-terminus, the 99-residue chain is Small ribosomal subunit protein uS14m (99 aa).

Belongs to the universal ribosomal protein uS14 family.

The protein localises to the mitochondrion. This is Small ribosomal subunit protein uS14m (RPS14) from Prototheca wickerhamii.